The primary structure comprises 117 residues: Non-specific lipid-transfer protein 1 (117 aa).

An N-terminal signal peptide occupies residues 1 to 25 (MAGLVKLSCLVLACMIVAGPIATNA). 4 cysteine pairs are disulfide-bonded: Cys-29–Cys-76, Cys-39–Cys-53, Cys-54–Cys-99, and Cys-74–Cys-113.

The protein belongs to the plant LTP family.

In terms of biological role, plant non-specific lipid-transfer proteins transfer phospholipids as well as galactolipids across membranes. May play a role in wax or cutin deposition in the cell walls of expanding epidermal cells and certain secretory tissues. The polypeptide is Non-specific lipid-transfer protein 1 (LTP1) (Brassica napus (Rape)).